A 119-amino-acid chain; its full sequence is Ribosome-binding factor A (119 aa).

The protein belongs to the RbfA family. Monomer. Binds 30S ribosomal subunits, but not 50S ribosomal subunits or 70S ribosomes.

The protein localises to the cytoplasm. One of several proteins that assist in the late maturation steps of the functional core of the 30S ribosomal subunit. Associates with free 30S ribosomal subunits (but not with 30S subunits that are part of 70S ribosomes or polysomes). Required for efficient processing of 16S rRNA. May interact with the 5'-terminal helix region of 16S rRNA. The sequence is that of Ribosome-binding factor A from Chlorobium limicola (strain DSM 245 / NBRC 103803 / 6330).